The primary structure comprises 185 residues: Ribosome-recycling factor (185 aa).

Belongs to the RRF family.

Its subcellular location is the cytoplasm. Responsible for the release of ribosomes from messenger RNA at the termination of protein biosynthesis. May increase the efficiency of translation by recycling ribosomes from one round of translation to another. The chain is Ribosome-recycling factor from Corynebacterium aurimucosum (strain ATCC 700975 / DSM 44827 / CIP 107346 / CN-1) (Corynebacterium nigricans).